A 511-amino-acid polypeptide reads, in one-letter code: Bifunctional purine biosynthesis protein PurH (511 aa).

One can recognise an MGS-like domain in the interval 1–144 (MKTALLSVSD…KNFASVLPVV (144 aa)).

The protein belongs to the PurH family.

It carries out the reaction (6R)-10-formyltetrahydrofolate + 5-amino-1-(5-phospho-beta-D-ribosyl)imidazole-4-carboxamide = 5-formamido-1-(5-phospho-D-ribosyl)imidazole-4-carboxamide + (6S)-5,6,7,8-tetrahydrofolate. It catalyses the reaction IMP + H2O = 5-formamido-1-(5-phospho-D-ribosyl)imidazole-4-carboxamide. Its pathway is purine metabolism; IMP biosynthesis via de novo pathway; 5-formamido-1-(5-phospho-D-ribosyl)imidazole-4-carboxamide from 5-amino-1-(5-phospho-D-ribosyl)imidazole-4-carboxamide (10-formyl THF route): step 1/1. The protein operates within purine metabolism; IMP biosynthesis via de novo pathway; IMP from 5-formamido-1-(5-phospho-D-ribosyl)imidazole-4-carboxamide: step 1/1. The protein is Bifunctional purine biosynthesis protein PurH of Pediococcus pentosaceus (strain ATCC 25745 / CCUG 21536 / LMG 10740 / 183-1w).